The sequence spans 298 residues: Acetylglutamate kinase (298 aa).

Substrate-binding positions include 69-70, arginine 91, and asparagine 191; that span reads GG.

It belongs to the acetylglutamate kinase family. ArgB subfamily.

The protein resides in the cytoplasm. The catalysed reaction is N-acetyl-L-glutamate + ATP = N-acetyl-L-glutamyl 5-phosphate + ADP. The protein operates within amino-acid biosynthesis; L-arginine biosynthesis; N(2)-acetyl-L-ornithine from L-glutamate: step 2/4. Catalyzes the ATP-dependent phosphorylation of N-acetyl-L-glutamate. The protein is Acetylglutamate kinase of Neisseria meningitidis serogroup C / serotype 2a (strain ATCC 700532 / DSM 15464 / FAM18).